The following is a 412-amino-acid chain: Small ribosomal subunit protein mL103 (rPPR7) (412 aa).

The transit peptide at 1–14 directs the protein to the mitochondrion; sequence MASSRISLRLVRRF. Positions 21 to 37 are enriched in polar residues; the sequence is GTTTAPSSGKISVSKAK. The segment at 21 to 43 is disordered; the sequence is GTTTAPSSGKISVSKAKSTLRKE. 8 PPR repeats span residues 101-135, 136-166, 173-207, 208-242, 243-276, 277-311, 312-346, and 347-377; these read EEPF…GTPR, SAVS…IPQR, DKIS…GMEV, TTIA…GCEL, DNAA…GLKP, DTIS…NCAP, NAAT…HKIP, and DFNT…VKKK.

It belongs to the PPR family. P subfamily. Component of the mitochondrial ribosome small subunit.

The protein resides in the mitochondrion. The protein is Small ribosomal subunit protein mL103 (rPPR7) of Arabidopsis thaliana (Mouse-ear cress).